We begin with the raw amino-acid sequence, 87 residues long: uncharacterized protein (87 aa).

This sequence belongs to the SF3B5 family.

This is an uncharacterized protein from Arabidopsis thaliana (Mouse-ear cress).